The following is a 346-amino-acid chain: Tryptophan--tRNA ligase (346 aa).

ATP contacts are provided by residues 10–12 (QAS) and 18–19 (GN). A 'HIGH' region motif is present at residues 11-19 (ASGKQHLGN). Aspartate 140 lines the L-tryptophan pocket. Residues 152–154 (GND), isoleucine 191, and 200–204 (KMSKS) contribute to the ATP site. The 'KMSKS' region motif lies at 200–204 (KMSKS).

It belongs to the class-I aminoacyl-tRNA synthetase family. As to quaternary structure, homodimer.

It is found in the cytoplasm. The catalysed reaction is tRNA(Trp) + L-tryptophan + ATP = L-tryptophyl-tRNA(Trp) + AMP + diphosphate + H(+). Catalyzes the attachment of tryptophan to tRNA(Trp). This is Tryptophan--tRNA ligase from Mycoplasma pneumoniae (strain ATCC 29342 / M129 / Subtype 1) (Mycoplasmoides pneumoniae).